The following is a 23-amino-acid chain: Paralytic peptide 1 (23 aa).

C7 and C19 form a disulfide bridge.

Belongs to the GBP/PSP1/paralytic peptide family. In terms of tissue distribution, hemolymph.

Causes rapid, rigid paralysis when injected into Lepidopteran larvae. The physiological role may be to reduce hemolymph loss following injury and promote wound healing. In Heliothis virescens (Tobacco budworm moth), this protein is Paralytic peptide 1.